A 183-amino-acid chain; its full sequence is MNIIAGFQNNFSEGLYSKFKSYRYKVFVEHLGWELNCPHNEELDQFDKVDTAYVVAQDRDSNIIGCARLLPTTQPYLLGEIFPQLLNGIPLPCSPEIWELSRFSAVDFSNPPTTASQAVSSPVSIAILQEAINFARAQGAKQLITTSPLGVERLLRAAGFRAHRAGPPMTIDGYSMFACLIDV.

Belongs to the autoinducer synthase family.

The catalysed reaction is a fatty acyl-[ACP] + S-adenosyl-L-methionine = an N-acyl-L-homoserine lactone + S-methyl-5'-thioadenosine + holo-[ACP] + H(+). Involved in the synthesis of the acyl-homoserine lactone (AHL) signal N-(3-hydroxydodecanoyl)-L-HSL (3-hydroxy-C(12)-HSL or OH-dDHL). Probably part of a quorum-sensing system with AnoR. The sequence is that of Acyl-homoserine-lactone synthase from Acinetobacter nosocomialis.